The following is a 232-amino-acid chain: Putative N-acetylmannosamine-6-phosphate 2-epimerase (232 aa).

The protein belongs to the NanE family.

It carries out the reaction an N-acyl-D-glucosamine 6-phosphate = an N-acyl-D-mannosamine 6-phosphate. The protein operates within amino-sugar metabolism; N-acetylneuraminate degradation; D-fructose 6-phosphate from N-acetylneuraminate: step 3/5. Converts N-acetylmannosamine-6-phosphate (ManNAc-6-P) to N-acetylglucosamine-6-phosphate (GlcNAc-6-P). The sequence is that of Putative N-acetylmannosamine-6-phosphate 2-epimerase from Borrelia garinii subsp. bavariensis (strain ATCC BAA-2496 / DSM 23469 / PBi) (Borreliella bavariensis).